Consider the following 149-residue polypeptide: Large ribosomal subunit protein bL9 (149 aa).

The protein belongs to the bacterial ribosomal protein bL9 family.

Binds to the 23S rRNA. The chain is Large ribosomal subunit protein bL9 from Salinibacter ruber (strain DSM 13855 / M31).